Reading from the N-terminus, the 936-residue chain is Intimin (936 aa).

Positions 1–41 are cleaved as a signal peptide; the sequence is MIIHGFCTGTRHKHKLRKTFIMLGAGLGLFFSVNQNSFANG. The 50-residue stretch at 63 to 112 folds into the LysM domain; that stretch reads LFYTLKTGESVAQLSKSQGISVPVIWSLNKHLYSSESEMMKASPGQQIIL. Big-1 domains are found at residues 557–650 and 657–748; these read ITNF…VIFV and ITEI…VEFF. Residues 780-831 form the BIG2 domain; sequence KLQATGGNGKYTWKSSNTKIASVDNSGVITLNEKGSATITVVSGDNQSATYT. An intrachain disulfide couples Cys-857 to Cys-934.

Belongs to the intimin/invasin family.

It localises to the cell outer membrane. An inverse autotransporter. This is Intimin (eae) from Citrobacter freundii.